A 90-amino-acid chain; its full sequence is MAKVLVLLKVLPEDINIDLEELKEKIRKALPEGYEIKGYDIEPIAFGLKALRLYIFMPEETEGGTEPLENTVMNVEGVSQVEVEAVHRIT.

The protein belongs to the EF-1-beta/EF-1-delta family.

Its function is as follows. Promotes the exchange of GDP for GTP in EF-1-alpha/GDP, thus allowing the regeneration of EF-1-alpha/GTP that could then be used to form the ternary complex EF-1-alpha/GTP/AAtRNA. This is Elongation factor 1-beta from Staphylothermus marinus (strain ATCC 43588 / DSM 3639 / JCM 9404 / F1).